The chain runs to 72 residues: Toxin Cll8 (72 aa).

The N-terminal stretch at 1–4 (TVSA) is a signal peptide. The LCN-type CS-alpha/beta domain occupies 5–70 (KEGYLVKKSN…TWPLPNKSCG (66 aa)). 4 disulfides stabilise this stretch: Cys-16–Cys-69, Cys-20–Cys-45, Cys-29–Cys-50, and Cys-33–Cys-52. Cys-69 carries the post-translational modification Cysteine amide.

It belongs to the long (4 C-C) scorpion toxin superfamily. Sodium channel inhibitor family. Beta subfamily. Expressed by the venom gland.

It is found in the secreted. Its function is as follows. Beta toxins bind voltage-independently at site-4 of sodium channels (Nav) and shift the voltage of activation toward more negative potentials thereby affecting sodium channel activation and promoting spontaneous and repetitive firing. This is Toxin Cll8 from Centruroides limpidus (Mexican scorpion).